A 60-amino-acid chain; its full sequence is Homeobox protein engrailed-like (60 aa).

Residues 1–41 (GEQLCRLRAEFQASRYLTEERRTALARELRLNEAQIKIWFQ) constitute a DNA-binding region (homeobox).

It belongs to the engrailed homeobox family.

Its subcellular location is the nucleus. This Lampetra planeri (Brook lamprey) protein is Homeobox protein engrailed-like.